The sequence spans 245 residues: Aliphatic sulfonates import ATP-binding protein SsuB 1 (245 aa).

The ABC transporter domain occupies 9-227 (LDLVGIGHRY…HRGDAQLAAW (219 aa)). 41–48 (GPSGVGKS) is a binding site for ATP.

It belongs to the ABC transporter superfamily. Aliphatic sulfonates importer (TC 3.A.1.17.2) family. In terms of assembly, the complex is composed of two ATP-binding proteins (SsuB), two transmembrane proteins (SsuC) and a solute-binding protein (SsuA).

The protein resides in the cell membrane. It carries out the reaction ATP + H2O + aliphatic sulfonate-[sulfonate-binding protein]Side 1 = ADP + phosphate + aliphatic sulfonateSide 2 + [sulfonate-binding protein]Side 1.. Functionally, part of the ABC transporter complex SsuABC involved in aliphatic sulfonates import. Responsible for energy coupling to the transport system. The polypeptide is Aliphatic sulfonates import ATP-binding protein SsuB 1 (Rhodococcus jostii (strain RHA1)).